Here is a 193-residue protein sequence, read N- to C-terminus: NADH-quinone oxidoreductase subunit B (193 aa).

The segment at 1-25 is disordered; sequence MGLNDSSGTLVAPKPKGIIDPNTGR. 4 residues coordinate [4Fe-4S] cluster: Cys-72, Cys-73, Cys-137, and Cys-167.

Belongs to the complex I 20 kDa subunit family. In terms of assembly, NDH-1 is composed of 14 different subunits. Subunits NuoB, C, D, E, F, and G constitute the peripheral sector of the complex. [4Fe-4S] cluster is required as a cofactor.

The protein localises to the cell inner membrane. The enzyme catalyses a quinone + NADH + 5 H(+)(in) = a quinol + NAD(+) + 4 H(+)(out). NDH-1 shuttles electrons from NADH, via FMN and iron-sulfur (Fe-S) centers, to quinones in the respiratory chain. Couples the redox reaction to proton translocation (for every two electrons transferred, four hydrogen ions are translocated across the cytoplasmic membrane), and thus conserves the redox energy in a proton gradient. This chain is NADH-quinone oxidoreductase subunit B, found in Mesorhizobium japonicum (strain LMG 29417 / CECT 9101 / MAFF 303099) (Mesorhizobium loti (strain MAFF 303099)).